Reading from the N-terminus, the 207-residue chain is N-(5'-phosphoribosyl)anthranilate isomerase (207 aa).

This sequence belongs to the TrpF family.

The enzyme catalyses N-(5-phospho-beta-D-ribosyl)anthranilate = 1-(2-carboxyphenylamino)-1-deoxy-D-ribulose 5-phosphate. The protein operates within amino-acid biosynthesis; L-tryptophan biosynthesis; L-tryptophan from chorismate: step 3/5. In Halorhodospira halophila (strain DSM 244 / SL1) (Ectothiorhodospira halophila (strain DSM 244 / SL1)), this protein is N-(5'-phosphoribosyl)anthranilate isomerase.